A 427-amino-acid polypeptide reads, in one-letter code: Glutamate-1-semialdehyde 2,1-aminomutase (427 aa).

Lysine 265 carries the post-translational modification N6-(pyridoxal phosphate)lysine.

The protein belongs to the class-III pyridoxal-phosphate-dependent aminotransferase family. HemL subfamily. In terms of assembly, homodimer. Requires pyridoxal 5'-phosphate as cofactor.

It localises to the cytoplasm. It carries out the reaction (S)-4-amino-5-oxopentanoate = 5-aminolevulinate. The protein operates within porphyrin-containing compound metabolism; protoporphyrin-IX biosynthesis; 5-aminolevulinate from L-glutamyl-tRNA(Glu): step 2/2. The chain is Glutamate-1-semialdehyde 2,1-aminomutase from Neisseria meningitidis serogroup C / serotype 2a (strain ATCC 700532 / DSM 15464 / FAM18).